The chain runs to 295 residues: Protein shisa-2 homolog (295 aa).

Residues 1–33 (MWGARRSSVSSSWNAASLLQLLLAALLAAGARA) form the signal peptide. Residues 34 to 110 (SGEYCHGWLD…RADKDGPDGS (77 aa)) are Extracellular-facing. The disordered stretch occupies residues 87–108 (GCDNDRQQGAGEPGRADKDGPD). The helical transmembrane segment at 111–131 (AVPIYVPFLIVGSVFVAFIIL) threads the bilayer. Topologically, residues 132–295 (GSLVAACCCR…EQKMYPAVTV (164 aa)) are cytoplasmic. Residues 168–205 (PSASTSRGSSSRQSSTAASSSSSANSGARAPPTRSQTN) form a disordered region. A compositionally biased stretch (low complexity) spans 169 to 197 (SASTSRGSSSRQSSTAASSSSSANSGARA).

It belongs to the shisa family.

The protein localises to the endoplasmic reticulum membrane. Its function is as follows. Plays an essential role in the maturation of presomitic mesoderm cells by individual attenuation of both FGF and WNT signaling. This chain is Protein shisa-2 homolog (SHISA2), found in Homo sapiens (Human).